The following is a 152-amino-acid chain: uncharacterized protein (152 aa).

The protein belongs to the antirestriction protein family.

This is an uncharacterized protein from Escherichia coli (strain K12).